We begin with the raw amino-acid sequence, 117 residues long: Large ribosomal subunit protein bL20 (117 aa).

It belongs to the bacterial ribosomal protein bL20 family.

Functionally, binds directly to 23S ribosomal RNA and is necessary for the in vitro assembly process of the 50S ribosomal subunit. It is not involved in the protein synthesizing functions of that subunit. The sequence is that of Large ribosomal subunit protein bL20 from Pelobacter propionicus (strain DSM 2379 / NBRC 103807 / OttBd1).